Reading from the N-terminus, the 817-residue chain is Two pore calcium channel protein 1 (817 aa).

The Cytoplasmic portion of the chain corresponds to 1–113 (MAVSLDDDVP…VHNHFFYMME (113 aa)). The interval 20–65 (SAPLPPSNSLGQEQLPSKNGGSHSIHNSQVPSLVSGADSPPSSPTG) is disordered. The segment covering 26–51 (SNSLGQEQLPSKNGGSHSIHNSQVPS) has biased composition (polar residues). The chain crosses the membrane as a helical span at residues 114-134 (LLTALLLLLLSLCESPAVPVL). Residues 135-137 (KLH) lie on the Extracellular side of the membrane. The helical transmembrane segment at 138 to 158 (TYVHATLELFALMVVVFELCM) threads the bilayer. Topologically, residues 159–172 (KLRWLGFHTFVRHK) are cytoplasmic. The chain crosses the membrane as a helical span at residues 173-193 (RTMVKTSVLVVQFIEAIVVLV). Residues 194 to 202 (RQTSHVRVT) lie on the Extracellular side of the membrane. A helical membrane pass occupies residues 203 to 221 (RALRCIFLVDCRYCGGVRR). The Cytoplasmic portion of the chain corresponds to 222–235 (NLRQIFQSLPPFMD). A helical membrane pass occupies residues 236-256 (ILLLLLFFMIIFAILGFYLFS). Topologically, residues 257–263 (TNPSDPY) are extracellular. Positions 264–287 (FSTLENSIVNLFVLLTTANFPDVM) form an intramembrane region, helical; Pore-forming. Residues 288-298 (MPSYSRNPWSC) are Extracellular-facing. The chain crosses the membrane as a helical span at residues 299–319 (VFFIVYLSIELYFIMNLLLAV). The Cytoplasmic segment spans residues 320–445 (VFDTFNDIEK…NILVNSKAFQ (126 aa)). A helical transmembrane segment spans residues 446-466 (YFMYLVVAVNGVWILVETFML). Topologically, residues 467-480 (KGGNFTSKHVPWSY) are extracellular. N-linked (GlcNAc...) asparagine glycosylation is present at N470. The helical transmembrane segment at 481–501 (LVFLTIYGVELFMKVAGLGPV) threads the bilayer. Topologically, residues 502-504 (EYL) are cytoplasmic. Residues 505–527 (SSGWNLFDFSVTAFAFLGLLALT) traverse the membrane as a helical segment. The Extracellular portion of the chain corresponds to 528-535 (LNMEPFYF). The helical transmembrane segment at 536-550 (IVVLRPLQLLRLFKL) threads the bilayer. Residues 551–569 (KKRYRNVLDTMFELLPRMA) lie on the Cytoplasmic side of the membrane. A helical membrane pass occupies residues 570–590 (SLGLTLLTFYYSFAIVGMEFF). Residues 591–630 (NGRLTPNCCNTSTVADAYRFINHTVGNKTKVEEGYYYLNN) are Extracellular-facing. The helical; Pore-forming intramembrane region spans 631–654 (FDNILNSFVTLFELTVVNNWYIIM). At 655–671 (EGVTSQTSHWSRLYFMT) the chain is on the extracellular side. Residues 672 to 692 (FYIVTMVVMTIIVAFILEAFV) traverse the membrane as a helical segment. Residues 693–817 (FRMNYSRKSQ…GSRQRSQTVT (125 aa)) are Cytoplasmic-facing. A coiled-coil region spans residues 770-794 (SLKMYQEEIQEWYEEHAREQEQQKL). Residues 785 to 817 (HAREQEQQKLRGSVPGPAAQQPPGSRQRSQTVT) form a disordered region. Residues 806 to 817 (PPGSRQRSQTVT) show a composition bias toward polar residues.

The protein belongs to the calcium channel alpha-1 subunit (TC 1.A.1.11) family. Two pore calcium channel subfamily. Dimer. Interacts with MTOR; the interaction is required for TPCN1 ATP sensitivity. Interacts with STX7, STX8 and STX12. Interacts with JPT2. Found in a complex with LSM12, TPCN1 and TPCN2. In terms of processing, N-glycosylated. In terms of tissue distribution, mainly expressed in epithelial tissues like lung, kidney, colon, spleen and liver (at protein level).

It is found in the lysosome membrane. It localises to the endosome membrane. The protein resides in the early endosome membrane. Its subcellular location is the recycling endosome membrane. The catalysed reaction is Na(+)(in) = Na(+)(out). It carries out the reaction Ca(2+)(in) = Ca(2+)(out). Na(+) current is inhibited by ATP in a MTORC-dependent manner. ATP sensitivity is independent of PI(3,5)P2. Probably regulated by Mg(2+) ions, cytosolic Mg(2+) selectively inhibits outward current while lysosomal Mg(2+) modestly inhibits both the outward and inward currents. In the absence of Mg(2+), NAADP readily activates TPCN2, with properties similar to PI(3,5)P2. Both current elicited by PI(3,5)P2 as well as NAADP are inhibited by tetrandrine. Intracellular channel initially characterized as a non-selective Ca(2+)-permeable channel activated by NAADP (nicotinic acid adenine dinucleotide phosphate), it is also a voltage-gated highly-selective Na(+) channel activated directly by PI(3,5)P2 (phosphatidylinositol 3,5-bisphosphate) that senses pH changes and confers electrical excitability to organelles. Localizes to the early and recycling endosomes membranes where it plays a role in the uptake and processing of proteins and regulates organellar membrane excitability, membrane trafficking and pH homeostasis. Ion selectivity is not fixed but rather agonist-dependent and under defined ionic conditions, can be readily activated by both NAADP and PI(3,5)P2. Required for mTOR-dependent nutrient sensing. This chain is Two pore calcium channel protein 1, found in Mus musculus (Mouse).